The primary structure comprises 352 residues: Phosphoribosylformylglycinamidine cyclo-ligase (352 aa).

It belongs to the AIR synthase family.

The protein resides in the cytoplasm. The enzyme catalyses 2-formamido-N(1)-(5-O-phospho-beta-D-ribosyl)acetamidine + ATP = 5-amino-1-(5-phospho-beta-D-ribosyl)imidazole + ADP + phosphate + H(+). Its pathway is purine metabolism; IMP biosynthesis via de novo pathway; 5-amino-1-(5-phospho-D-ribosyl)imidazole from N(2)-formyl-N(1)-(5-phospho-D-ribosyl)glycinamide: step 2/2. This Teredinibacter turnerae (strain ATCC 39867 / T7901) protein is Phosphoribosylformylglycinamidine cyclo-ligase.